The sequence spans 453 residues: Putative sodium-coupled neutral amino acid transporter 11 (453 aa).

A compositionally biased stretch (polar residues) spans 1-10 (MSYQQPQLSG). The tract at residues 1–34 (MSYQQPQLSGPLQRETDSSDRESLISGHEHGGKS) is disordered. The span at 14–32 (RETDSSDRESLISGHEHGG) shows a compositional bias: basic and acidic residues. 11 helical membrane-spanning segments follow: residues 39–59 (AVFN…PYSM), 66–86 (LGIL…VLLI), 106–126 (GFPG…IAMI), 150–170 (GWFI…TLPL), 179–199 (LGKI…IVMT), 222–242 (AIQA…CFLV), 262–282 (ILVS…TFTG), 299–319 (VTFG…IECF), 337–357 (VFHT…SLMI), 359–379 (CLGI…IFII), and 398–418 (IMAC…FVMA). 2 N-linked (GlcNAc...) asparagine glycosylation sites follow: asparagine 438 and asparagine 443.

Belongs to the amino acid/polyamine transporter 2 family.

The protein localises to the membrane. Putative sodium-dependent amino acid/proton antiporter. The polypeptide is Putative sodium-coupled neutral amino acid transporter 11 (Slc38a11) (Mus musculus (Mouse)).